An 89-amino-acid polypeptide reads, in one-letter code: Small ribosomal subunit protein uS15 (89 aa).

The protein belongs to the universal ribosomal protein uS15 family. As to quaternary structure, part of the 30S ribosomal subunit. Forms a bridge to the 50S subunit in the 70S ribosome, contacting the 23S rRNA.

One of the primary rRNA binding proteins, it binds directly to 16S rRNA where it helps nucleate assembly of the platform of the 30S subunit by binding and bridging several RNA helices of the 16S rRNA. Its function is as follows. Forms an intersubunit bridge (bridge B4) with the 23S rRNA of the 50S subunit in the ribosome. The chain is Small ribosomal subunit protein uS15 from Geobacillus stearothermophilus (Bacillus stearothermophilus).